We begin with the raw amino-acid sequence, 375 residues long: Succinyl-diaminopimelate desuccinylase (375 aa).

His66 is a Zn(2+) binding site. The active site involves Asp68. Residue Asp99 coordinates Zn(2+). Glu133 serves as the catalytic Proton acceptor. Zn(2+) is bound by residues Glu134, Glu162, and His348.

Belongs to the peptidase M20A family. DapE subfamily. In terms of assembly, homodimer. The cofactor is Zn(2+). Co(2+) serves as cofactor.

The catalysed reaction is N-succinyl-(2S,6S)-2,6-diaminopimelate + H2O = (2S,6S)-2,6-diaminopimelate + succinate. It functions in the pathway amino-acid biosynthesis; L-lysine biosynthesis via DAP pathway; LL-2,6-diaminopimelate from (S)-tetrahydrodipicolinate (succinylase route): step 3/3. Functionally, catalyzes the hydrolysis of N-succinyl-L,L-diaminopimelic acid (SDAP), forming succinate and LL-2,6-diaminopimelate (DAP), an intermediate involved in the bacterial biosynthesis of lysine and meso-diaminopimelic acid, an essential component of bacterial cell walls. This chain is Succinyl-diaminopimelate desuccinylase, found in Escherichia coli O17:K52:H18 (strain UMN026 / ExPEC).